The chain runs to 927 residues: Isoleucine--tRNA ligase (927 aa).

The short motif at 57–67 is the 'HIGH' region element; sequence PFANGNIHMGH. An L-isoleucyl-5'-AMP-binding site is contributed by Glu-553. The 'KMSKS' region signature appears at 594 to 598; that stretch reads KMSKS. Lys-597 contributes to the ATP binding site. Residues Cys-886, Cys-889, Cys-906, and Cys-909 each coordinate Zn(2+).

The protein belongs to the class-I aminoacyl-tRNA synthetase family. IleS type 1 subfamily. In terms of assembly, monomer. It depends on Zn(2+) as a cofactor.

Its subcellular location is the cytoplasm. The catalysed reaction is tRNA(Ile) + L-isoleucine + ATP = L-isoleucyl-tRNA(Ile) + AMP + diphosphate. Its function is as follows. Catalyzes the attachment of isoleucine to tRNA(Ile). As IleRS can inadvertently accommodate and process structurally similar amino acids such as valine, to avoid such errors it has two additional distinct tRNA(Ile)-dependent editing activities. One activity is designated as 'pretransfer' editing and involves the hydrolysis of activated Val-AMP. The other activity is designated 'posttransfer' editing and involves deacylation of mischarged Val-tRNA(Ile). In Lactobacillus helveticus (strain DPC 4571), this protein is Isoleucine--tRNA ligase.